We begin with the raw amino-acid sequence, 166 residues long: Interferon gamma (166 aa).

A signal peptide spans 1-23 (MNYTSFILAFQLCAILGSSTYYC). Glutamine 24 is subject to Pyrrolidone carboxylic acid. N-linked (GlcNAc...) asparagine glycans are attached at residues asparagine 39 and asparagine 106. The tract at residues 147-166 (ANLRKRKRSQNPFRGRRALQ) is disordered. Basic residues predominate over residues 148 to 166 (NLRKRKRSQNPFRGRRALQ).

The protein belongs to the type II (or gamma) interferon family. As to quaternary structure, homodimer. Interacts with IFNGR1 (via extracellular domain); this interaction promotes IFNGR1 dimerization. As to expression, released primarily from activated T lymphocytes.

The protein resides in the secreted. Functionally, type II interferon produced by immune cells such as T-cells and NK cells that plays crucial roles in antimicrobial, antiviral, and antitumor responses by activating effector immune cells and enhancing antigen presentation. Primarily signals through the JAK-STAT pathway after interaction with its receptor IFNGR1 to affect gene regulation. Upon IFNG binding, IFNGR1 intracellular domain opens out to allow association of downstream signaling components JAK2, JAK1 and STAT1, leading to STAT1 activation, nuclear translocation and transcription of IFNG-regulated genes. Many of the induced genes are transcription factors such as IRF1 that are able to further drive regulation of a next wave of transcription. Plays a role in class I antigen presentation pathway by inducing a replacement of catalytic proteasome subunits with immunoproteasome subunits. In turn, increases the quantity, quality, and repertoire of peptides for class I MHC loading. Increases the efficiency of peptide generation also by inducing the expression of activator PA28 that associates with the proteasome and alters its proteolytic cleavage preference. Up-regulates as well MHC II complexes on the cell surface by promoting expression of several key molecules such as cathepsins B/CTSB, H/CTSH, and L/CTSL. Participates in the regulation of hematopoietic stem cells during development and under homeostatic conditions by affecting their development, quiescence, and differentiation. This is Interferon gamma (IFNG) from Equus asinus (Donkey).